The following is a 281-amino-acid chain: MSRISFDQLLEAGAHFGHLKRKWNPAMAPYIFMERNDIHIIDLHKTVAKVDEAAEVIKGMAKNGKKILFVATKKQAKEPIAELAKSVGMPYVVERWPGGMLTNFPTIRKAVKKMTQIDKMTADGTFDNLSKREKLQITRQRAKLEKTLGSIADMNRLPSALFVVDVMKEHIAVREANRLGIPVFAMVDTNSDPSLIDYVIPSNDDALKAIELIVGTMCQAINEGLMERKAEKPEEEETEEAAPRRERRARSGARRSRQNENEATAEAATEVAEAPEAEEAE.

The interval 225-281 (LMERKAEKPEEEETEEAAPRRERRARSGARRSRQNENEATAEAATEVAEAPEAEEAE) is disordered. The span at 245–256 (RERRARSGARRS) shows a compositional bias: basic residues. The segment covering 262–272 (EATAEAATEVA) has biased composition (low complexity).

It belongs to the universal ribosomal protein uS2 family.

This is Small ribosomal subunit protein uS2 from Porphyromonas gingivalis (strain ATCC 33277 / DSM 20709 / CIP 103683 / JCM 12257 / NCTC 11834 / 2561).